The sequence spans 406 residues: Argininosuccinate synthase (406 aa).

ATP-binding positions include 10-18 (AYSGGLDTS) and Ala-37. Positions 88 and 93 each coordinate L-citrulline. Gly-118 serves as a coordination point for ATP. Thr-120, Asn-124, and Asp-125 together coordinate L-aspartate. Asn-124 contacts L-citrulline. L-citrulline is bound by residues Arg-128, Ser-179, Ser-188, Glu-264, and Tyr-276.

Belongs to the argininosuccinate synthase family. Type 1 subfamily. As to quaternary structure, homotetramer.

The protein localises to the cytoplasm. It carries out the reaction L-citrulline + L-aspartate + ATP = 2-(N(omega)-L-arginino)succinate + AMP + diphosphate + H(+). Its pathway is amino-acid biosynthesis; L-arginine biosynthesis; L-arginine from L-ornithine and carbamoyl phosphate: step 2/3. The polypeptide is Argininosuccinate synthase (Roseobacter denitrificans (strain ATCC 33942 / OCh 114) (Erythrobacter sp. (strain OCh 114))).